The following is a 392-amino-acid chain: Na(+)/H(+) antiporter NhaA 2 (392 aa).

Transmembrane regions (helical) follow at residues 20 to 40 (FFAAEAAGGLILMAAALAALI), 63 to 83 (VEHWINDGLMAIFFMLVGLEI), 99 to 119 (ALPGFAALGGMVVPALIYVAF), 127 to 147 (IGGWAIPAATDIAFALGVLSL), 158 to 178 (IFLSALAILDDLGAVLIIALF), 181 to 201 (SDLSIPMLLAALGSIAVLVAL), 209 to 229 (LLPYLIVGALLWFFMLQSGIH), 265 to 285 (VAFAVVPVFGFANAGVSLSGI), 298 to 318 (VALGLLIGKQVGIFALAALAI), 336 to 356 (GVAALCGIGFTMSLFIGALAF), and 365 to 385 (EVKVGVLIGSVLSALLGVVVL).

The protein belongs to the NhaA Na(+)/H(+) (TC 2.A.33) antiporter family.

The protein resides in the cell inner membrane. The enzyme catalyses Na(+)(in) + 2 H(+)(out) = Na(+)(out) + 2 H(+)(in). In terms of biological role, na(+)/H(+) antiporter that extrudes sodium in exchange for external protons. This chain is Na(+)/H(+) antiporter NhaA 2, found in Pseudomonas savastanoi pv. phaseolicola (strain 1448A / Race 6) (Pseudomonas syringae pv. phaseolicola (strain 1448A / Race 6)).